The primary structure comprises 258 residues: Adenylate kinase (258 aa).

Residue 52–57 (GAGKGT) participates in ATP binding. Residues 72-101 (ATGDMLRSQVAKKTELGKEAKKIMDQGGLV) are NMP. AMP is bound by residues Thr-73, Arg-78, 99–101 (GLV), 128–131 (GFPR), and Gln-135. Positions 169 to 206 (GRLVHPASGRSYHKVFNPPKQEMKDDITGEPLIQRSDD) are LID. Residues Arg-170 and 179 to 180 (SY) contribute to the ATP site. AMP contacts are provided by Arg-203 and Arg-214. Gln-242 contributes to the ATP binding site.

The protein belongs to the adenylate kinase family. AK2 subfamily. As to quaternary structure, monomer.

Its subcellular location is the cytoplasm. It is found in the cytosol. The protein resides in the mitochondrion intermembrane space. It carries out the reaction AMP + ATP = 2 ADP. Functionally, catalyzes the reversible transfer of the terminal phosphate group between ATP and AMP. Plays an important role in cellular energy homeostasis and in adenine nucleotide metabolism. Adenylate kinase activity is critical for regulation of the phosphate utilization and the AMP de novo biosynthesis pathways. The sequence is that of Adenylate kinase (adk1) from Aspergillus oryzae (strain ATCC 42149 / RIB 40) (Yellow koji mold).